The primary structure comprises 552 residues: Putative transport protein HSM_0534 (552 aa).

A run of 5 helical transmembrane segments spans residues 4–24 (IAIT…IGHW), 28–48 (GVGL…HFMN), 67–87 (LILF…ASLL), 95–115 (GLAT…YKVV), and 157–177 (MAYA…MWLI). 2 RCK C-terminal domains span residues 190-275 (KQFQ…VIGE) and 277-360 (IDMP…IIGN). 6 helical membrane passes run 370–390 (MLPV…PFYI), 402–424 (AGGP…LYWF), 438–458 (IVLF…DTLV), 463–483 (LEWM…TGII), 495–515 (LCGL…ANAI), and 529–549 (VYPL…ILLW).

Belongs to the AAE transporter (TC 2.A.81) family. YidE subfamily.

The protein resides in the cell membrane. The polypeptide is Putative transport protein HSM_0534 (Histophilus somni (strain 2336) (Haemophilus somnus)).